The primary structure comprises 897 residues: DNA polymerase I (897 aa).

Positions 1–317 constitute a 5'-3' exonuclease domain; that stretch reads MEQPVIKEGT…ILDNTPALDN (317 aa). The 3'-5' exonuclease domain maps to 318–494; that stretch reads APKKSRMIVL…RLCEYFEKGG (177 aa). The tract at residues 498 to 896 is polymerase; the sequence is DLLTLARDIE…FIAKRWNELK (399 aa).

It belongs to the DNA polymerase type-A family. In terms of assembly, single-chain monomer with multiple functions.

The enzyme catalyses DNA(n) + a 2'-deoxyribonucleoside 5'-triphosphate = DNA(n+1) + diphosphate. In terms of biological role, in addition to polymerase activity, this DNA polymerase exhibits 3'-5' and 5'-3' exonuclease activity. The polypeptide is DNA polymerase I (polA) (Helicobacter pylori (strain J99 / ATCC 700824) (Campylobacter pylori J99)).